Reading from the N-terminus, the 423-residue chain is UDP-N-acetylglucosamine 1-carboxyvinyltransferase 2 (423 aa).

23–24 (KN) contributes to the phosphoenolpyruvate binding site. Residue R96 participates in UDP-N-acetyl-alpha-D-glucosamine binding. C120 (proton donor) is an active-site residue. Residue C120 is modified to 2-(S-cysteinyl)pyruvic acid O-phosphothioketal. UDP-N-acetyl-alpha-D-glucosamine-binding positions include 125–129 (RPIDL), D309, and V331.

Belongs to the EPSP synthase family. MurA subfamily.

The protein localises to the cytoplasm. The catalysed reaction is phosphoenolpyruvate + UDP-N-acetyl-alpha-D-glucosamine = UDP-N-acetyl-3-O-(1-carboxyvinyl)-alpha-D-glucosamine + phosphate. The protein operates within cell wall biogenesis; peptidoglycan biosynthesis. Functionally, cell wall formation. Adds enolpyruvyl to UDP-N-acetylglucosamine. The chain is UDP-N-acetylglucosamine 1-carboxyvinyltransferase 2 from Streptococcus agalactiae serotype III (strain NEM316).